We begin with the raw amino-acid sequence, 428 residues long: Protein clpf-1 (428 aa).

2 residues coordinate ATP: Glu-16 and Arg-56. Residues 99–118 form a disordered region; the sequence is KKREEQAVSNSSKPKGPRLL. 124–129 is an ATP binding site; sequence DVGKTT.

This sequence belongs to the Clp1 family. Clp1 subfamily.

The protein localises to the nucleus. Required for endonucleolytic cleavage during polyadenylation-dependent pre-mRNA 3'-end formation. The protein is Protein clpf-1 of Caenorhabditis briggsae.